A 199-amino-acid chain; its full sequence is MKQSHFFAHLSRLKLINRWPLMRNVLTENVSEHSLQVAMVAHALAAIKNRKFGGNVNAERIALLAMYHDASEVLTGDLPTPVKYFNSQIAQEYKAIEKIAQQKLVDMVPEELRDIFAPLIDEHAYSDEEKSLVKQADALCAYLKCLEELAAGNNEFLLAKTRLEATLEARRSQEMDYFMEVFVPSFHLSLDEISQDSPL.

Substrate is bound by residues 18-19 and histidine 33; that span reads RW. The region spanning 30–142 is the HD domain; it reads VSEHSLQVAM…VKQADALCAY (113 aa). A divalent metal cation is bound by residues histidine 33, histidine 68, and aspartate 69. Residues aspartate 69, 77-80, and aspartate 137 each bind substrate; that span reads DLPT. An a divalent metal cation-binding site is contributed by aspartate 137.

Belongs to the 5DNU family. In terms of assembly, homodimer. A divalent metal cation serves as cofactor.

It is found in the cytoplasm. The catalysed reaction is a 2'-deoxyribonucleoside 5'-phosphate + H2O = a 2'-deoxyribonucleoside + phosphate. Its function is as follows. Catalyzes the strictly specific dephosphorylation of 2'-deoxyribonucleoside 5'-monophosphates. The sequence is that of 5'-deoxynucleotidase YfbR from Shigella boydii serotype 18 (strain CDC 3083-94 / BS512).